The primary structure comprises 621 residues: 1-deoxy-D-xylulose-5-phosphate synthase (621 aa).

Thiamine diphosphate-binding positions include H80 and 121–123 (GHS). D152 lines the Mg(2+) pocket. Residues 153–154 (GA), N181, Y288, and E370 contribute to the thiamine diphosphate site. Position 181 (N181) interacts with Mg(2+).

The protein belongs to the transketolase family. DXPS subfamily. As to quaternary structure, homodimer. Mg(2+) is required as a cofactor. Thiamine diphosphate serves as cofactor.

The catalysed reaction is D-glyceraldehyde 3-phosphate + pyruvate + H(+) = 1-deoxy-D-xylulose 5-phosphate + CO2. It functions in the pathway metabolic intermediate biosynthesis; 1-deoxy-D-xylulose 5-phosphate biosynthesis; 1-deoxy-D-xylulose 5-phosphate from D-glyceraldehyde 3-phosphate and pyruvate: step 1/1. Catalyzes the acyloin condensation reaction between C atoms 2 and 3 of pyruvate and glyceraldehyde 3-phosphate to yield 1-deoxy-D-xylulose-5-phosphate (DXP). The chain is 1-deoxy-D-xylulose-5-phosphate synthase from Shewanella frigidimarina (strain NCIMB 400).